The following is a 215-amino-acid chain: Large ribosomal subunit protein uL3 (215 aa).

Residues 134–166 (MAHGSKNHRAPGSIGAGTTPGRVFPGKRMPGRM) form a disordered region.

Belongs to the universal ribosomal protein uL3 family. Part of the 50S ribosomal subunit. Forms a cluster with proteins L14 and L19.

One of the primary rRNA binding proteins, it binds directly near the 3'-end of the 23S rRNA, where it nucleates assembly of the 50S subunit. This is Large ribosomal subunit protein uL3 from Gloeobacter violaceus (strain ATCC 29082 / PCC 7421).